A 349-amino-acid polypeptide reads, in one-letter code: Fructose-1,6-bisphosphatase class 1 (349 aa).

Positions 91, 110, 112, and 113 each coordinate Mg(2+). Substrate-binding positions include 113–116 (DGSS) and Asn205. Glu277 is a binding site for Mg(2+).

It belongs to the FBPase class 1 family. As to quaternary structure, homotetramer. Mg(2+) is required as a cofactor.

Its subcellular location is the cytoplasm. The catalysed reaction is beta-D-fructose 1,6-bisphosphate + H2O = beta-D-fructose 6-phosphate + phosphate. The protein operates within carbohydrate biosynthesis; gluconeogenesis. The chain is Fructose-1,6-bisphosphatase class 1 from Sinorhizobium medicae (strain WSM419) (Ensifer medicae).